An 88-amino-acid chain; its full sequence is Cell division topological specificity factor (88 aa).

This sequence belongs to the MinE family.

In terms of biological role, prevents the cell division inhibition by proteins MinC and MinD at internal division sites while permitting inhibition at polar sites. This ensures cell division at the proper site by restricting the formation of a division septum at the midpoint of the long axis of the cell. This Clostridium kluyveri (strain ATCC 8527 / DSM 555 / NBRC 12016 / NCIMB 10680 / K1) protein is Cell division topological specificity factor.